A 525-amino-acid chain; its full sequence is Bifunctional enzyme NanE/NanK (525 aa).

Residues 1 to 241 (MRGSPRNLCR…DAVESAAKPS (241 aa)) are manNAc-6-P epimerase. The tract at residues 242–525 (SPVLAFDIGG…VADLAATYFS (284 aa)) is manNAc kinase. Residues 246 to 253 (AFDIGGTK) and 372 to 379 (GIGGGIVL) contribute to the ATP site.

It in the N-terminal section; belongs to the NanE family. The protein in the C-terminal section; belongs to the ROK (NagC/XylR) family. NanK subfamily.

It carries out the reaction an N-acyl-D-glucosamine 6-phosphate = an N-acyl-D-mannosamine 6-phosphate. The catalysed reaction is an N-acyl-D-mannosamine + ATP = an N-acyl-D-mannosamine 6-phosphate + ADP + H(+). It functions in the pathway amino-sugar metabolism; N-acetylneuraminate degradation; D-fructose 6-phosphate from N-acetylneuraminate: step 2/5. The protein operates within amino-sugar metabolism; N-acetylneuraminate degradation; D-fructose 6-phosphate from N-acetylneuraminate: step 3/5. Its function is as follows. Converts N-acetylmannosamine-6-phosphate (ManNAc-6-P) to N-acetylglucosamine-6-phosphate (GlcNAc-6-P). Catalyzes the phosphorylation of N-acetylmannosamine (ManNAc) to ManNAc-6-P. The protein is Bifunctional enzyme NanE/NanK (nanEK) of Brucella suis biovar 1 (strain 1330).